The primary structure comprises 110 residues: Insulin (110 aa).

The first 24 residues, 1-24, serve as a signal peptide directing secretion; it reads MALWMRLLPLLALLALWGPDPVPA. 3 disulfide bridges follow: Cys-31-Cys-96, Cys-43-Cys-109, and Cys-95-Cys-100. Positions 57–87 are cleaved as a propeptide — c peptide; sequence EAEDPQVGQVELGGGPGAGSLQPLALEGSLQ.

Belongs to the insulin family. Heterodimer of a B chain and an A chain linked by two disulfide bonds.

The protein resides in the secreted. Insulin decreases blood glucose concentration. It increases cell permeability to monosaccharides, amino acids and fatty acids. It accelerates glycolysis, the pentose phosphate cycle, and glycogen synthesis in liver. The polypeptide is Insulin (INS) (Chlorocebus aethiops (Green monkey)).